The chain runs to 524 residues: Ribonuclease Y (524 aa).

Residues 3–23 (IVINLLLLVLAALVAFVAGFF) traverse the membrane as a helical segment. The KH domain occupies 214–280 (ALSVVHIQSD…KLTLKKLLAD (67 aa)). One can recognise an HD domain in the interval 340-432 (LLQHSREVAM…VDAANTISLS (93 aa)).

This sequence belongs to the RNase Y family.

The protein resides in the cell membrane. In terms of biological role, endoribonuclease that initiates mRNA decay. The chain is Ribonuclease Y from Chlorobium chlorochromatii (strain CaD3).